Consider the following 114-residue polypeptide: Nucleoid-associated protein Clos_2855 (114 aa).

It belongs to the YbaB/EbfC family. Homodimer.

It is found in the cytoplasm. The protein resides in the nucleoid. In terms of biological role, binds to DNA and alters its conformation. May be involved in regulation of gene expression, nucleoid organization and DNA protection. This Alkaliphilus oremlandii (strain OhILAs) (Clostridium oremlandii (strain OhILAs)) protein is Nucleoid-associated protein Clos_2855.